Here is a 137-residue protein sequence, read N- to C-terminus: Histone H2B (137 aa).

Over residues 1 to 10 the composition is skewed to basic and acidic residues; the sequence is MAPKAADKKP. The interval 1 to 46 is disordered; sequence MAPKAADKKPASKAPATASKAPEKKDAGKKTAASGDKKKRSKSRKE. 2 positions are modified to N6-acetyllysine; alternate: Lys8 and Lys9. Residues Lys8 and Lys9 each participate in a glycyl lysine isopeptide (Lys-Gly) (interchain with G-Cter in SUMO); alternate cross-link. Ser12 carries the phosphoserine modification. Residue Lys13 is modified to N6-acetyllysine. N6-acetyllysine; alternate is present on Lys24. A Glycyl lysine isopeptide (Lys-Gly) (interchain with G-Cter in SUMO); alternate cross-link involves residue Lys24. Lys25 is covalently cross-linked (Glycyl lysine isopeptide (Lys-Gly) (interchain with G-Cter in SUMO)). Lys131 is covalently cross-linked (Glycyl lysine isopeptide (Lys-Gly) (interchain with G-Cter in ubiquitin)).

The protein belongs to the histone H2B family. The nucleosome is a histone octamer containing two molecules each of H2A, H2B, H3 and H4 assembled in one H3-H4 heterotetramer and two H2A-H2B heterodimers. The octamer wraps approximately 147 bp of DNA. Post-translationally, monoubiquitinated by the UBC2-BRE1 complex to form H2BK123ub1. H2BK123ub1 gives a specific tag for epigenetic transcriptional activation and is also prerequisite for H3K4me and H3K79me formation. H2BK123ub1 also modulates the formation of double-strand breaks during meiosis and is a prerequisite for DNA-damage checkpoint activation. In terms of processing, phosphorylated to form H2BS10ph during progression through meiotic prophase. May be correlated with chromosome condensation. Acetylated by GCN5 to form H2BK11ac and H2BK16ac. H2BK16ac can also be formed by ESA1. Acetylation of N-terminal lysines and particularly formation of H2BK11acK16ac has a positive effect on transcription. Post-translationally, sumoylation to form H2BK6su or H2BK7su, and probably also H2BK16su or H2BK17su, occurs preferentially near the telomeres and represses gene transcription.

It localises to the nucleus. The protein localises to the chromosome. In terms of biological role, core component of nucleosome. Nucleosomes wrap and compact DNA into chromatin, limiting DNA accessibility to the cellular machineries which require DNA as a template. Histones thereby play a central role in transcription regulation, DNA repair, DNA replication and chromosomal stability. DNA accessibility is regulated via a complex set of post-translational modifications of histones, also called histone code, and nucleosome remodeling. The sequence is that of Histone H2B (HTB1) from Gibberella zeae (strain ATCC MYA-4620 / CBS 123657 / FGSC 9075 / NRRL 31084 / PH-1) (Wheat head blight fungus).